Here is a 360-residue protein sequence, read N- to C-terminus: Cytokine receptor-like factor 2 (360 aa).

The signal sequence occupies residues 1–18 (MRAVTWAIVAMLLPRVLG). The Extracellular portion of the chain corresponds to 27 to 238 (TGGVGDTLSV…PRTPGTPTPP (212 aa)). The N-linked (GlcNAc...) asparagine glycan is linked to Asn-62. Cys-77 and Cys-90 are joined by a disulfide. The Fibronectin type-III domain maps to 123-214 (RPRPPWNVTL…PSKWTGVASL (92 aa)). N-linked (GlcNAc...) asparagine glycans are attached at residues Asn-129 and Asn-174. Cysteines 185 and 223 form a disulfide. Residues 205–209 (PSKWT) carry the WSXWS motif motif. The helical transmembrane segment at 239–259 (LALACGLAVALLTLVLLLALL) threads the bilayer. At 260-360 (RMRRVKEALL…LMGDSGYTTL (101 aa)) the chain is on the cytoplasmic side. Residues 268 to 276 (LLPGVPDPR) carry the Box 1 motif motif.

Belongs to the type I cytokine receptor family. Type 5 subfamily. Heterodimer of CRLF2 and IL7R. As to expression, expressed in all tissues examined including brain, thymus, lung, heart, muscle, stomach, small intestine, liver, kidney, spleen, testis and skin. Highest levels in thymus, liver and testis.

It localises to the membrane. Functionally, receptor for thymic stromal lymphopoietin (TSLP). Forms a functional complex with TSLP and IL7R which is capable of stimulating cell proliferation through activation of STAT3 and STAT5. Also activates JAK2. Implicated in the development of the hematopoietic system. The sequence is that of Cytokine receptor-like factor 2 (Crlf2) from Rattus norvegicus (Rat).